The primary structure comprises 341 residues: Dual oxidase maturation factor 1 (341 aa).

The Extracellular portion of the chain corresponds to 1 to 24 (MAALGHTLPFYTGTKPTFPMDTTL). A helical transmembrane segment spans residues 25-45 (AVIITIFLTALVTFIIILPGI). Residues 46–51 (RGKTRL) are Cytoplasmic-facing. A helical membrane pass occupies residues 52–72 (FWLLRVVTSLFIGAVILAVNF). Topologically, residues 73 to 183 (SSEWSVGHVN…RLAGHYASAM (111 aa)) are extracellular. Asn-84, Asn-109, and Asn-121 each carry an N-linked (GlcNAc...) asparagine glycan. The helical transmembrane segment at 184–204 (LWVAFLCWLLANVMLSMPVLV) threads the bilayer. A topological domain (cytoplasmic) is located at residue Tyr-205. The helical transmembrane segment at 206–226 (GGHMLLATGLFQLLALFFFSM) threads the bilayer. At 227–249 (TTSLISPCPLRLGTAVLHTHHGP) the chain is on the extracellular side. A helical transmembrane segment spans residues 250-270 (AFWITLATGLLCILLGLVMAV). Residues 271–341 (AHRMQPHRLK…EHPKESDCSL (71 aa)) lie on the Cytoplasmic side of the membrane.

Belongs to the DUOXA family. May interact with NUMB.

It localises to the membrane. Its function is as follows. May be required for the maturation and the transport from the endoplasmic reticulum to the plasma membrane of functional DUOX1. This is Dual oxidase maturation factor 1 (Duoxa1) from Mus musculus (Mouse).